We begin with the raw amino-acid sequence, 900 residues long: 3'-5' exonuclease DinG (900 aa).

In terms of domain architecture, Exonuclease spans 8 to 161 (VVDLETTGNQ…DEDAATTAQL (154 aa)). Residues 241 to 496 (TLVTKELGLT…KSIDLLEQQR (256 aa)) form the Helicase ATP-binding domain. 276–283 (APLGSGKS) provides a ligand contact to ATP. Residues 448–451 (DEAH) carry the DEAH box motif. Positions 714–883 (YVIEYVSVVE…RYRQKKGDIK (170 aa)) constitute a Helicase C-terminal domain.

It belongs to the helicase family. DinG subfamily. Type 2 sub-subfamily.

3'-5' exonuclease. In Staphylococcus saprophyticus subsp. saprophyticus (strain ATCC 15305 / DSM 20229 / NCIMB 8711 / NCTC 7292 / S-41), this protein is 3'-5' exonuclease DinG.